Reading from the N-terminus, the 507-residue chain is Maturase K (507 aa).

Belongs to the intron maturase 2 family. MatK subfamily.

The protein localises to the plastid. It is found in the chloroplast. Its function is as follows. Usually encoded in the trnK tRNA gene intron. Probably assists in splicing its own and other chloroplast group II introns. The sequence is that of Maturase K from Fagopyrum tataricum (Tartarian buckwheat).